Reading from the N-terminus, the 250-residue chain is Ribosomal RNA small subunit methyltransferase J (250 aa).

S-adenosyl-L-methionine-binding positions include 96–97 (RD) and Asp-168.

This sequence belongs to the methyltransferase superfamily. RsmJ family.

The protein resides in the cytoplasm. It carries out the reaction guanosine(1516) in 16S rRNA + S-adenosyl-L-methionine = N(2)-methylguanosine(1516) in 16S rRNA + S-adenosyl-L-homocysteine + H(+). Specifically methylates the guanosine in position 1516 of 16S rRNA. This chain is Ribosomal RNA small subunit methyltransferase J, found in Neisseria gonorrhoeae (strain NCCP11945).